We begin with the raw amino-acid sequence, 119 residues long: uncharacterized protein (119 aa).

Positions 1-29 (MKKVGEEEIKQEENEKEKIVKKLNESDVK) form a coiled coil.

This is an uncharacterized protein from Acidianus sp. F28 (AFV-2).